The sequence spans 608 residues: ATP-citrate synthase beta chain protein 1 (608 aa).

ATP-binding positions include isoleucine 214–glycine 234 and phenylalanine 265–alanine 291. Residue glutamate 231 participates in Mg(2+) binding. Histidine 273 serves as the catalytic Tele-phosphohistidine intermediate. Leucine 292–serine 302 lines the CoA pocket.

The protein belongs to the succinate/malate CoA ligase alpha subunit family. In terms of assembly, heterooctamer of 4 alpha and 4 beta chains.

The protein resides in the cytoplasm. It localises to the cytosol. The enzyme catalyses oxaloacetate + acetyl-CoA + ADP + phosphate = citrate + ATP + CoA. In terms of biological role, ATP citrate-lyase is the primary enzyme responsible for the synthesis of cytosolic acetyl-CoA, used for the elongation of fatty acids and biosynthesis of isoprenoids, flavonoids and malonated derivatives. May supply substrate to the cytosolic acetyl-CoA carboxylase, which generates the malonyl-CoA used for the synthesis of a multitude of compounds, including very long chain fatty acids and flavonoids. Required for normal growth and development and elongation of C18 fatty acids to C20 to C24 fatty acids in seeds. In contrast to all known animal ACL enzymes having a homomeric structure, plant ACLs are composed of alpha and beta chains. In Arabidopsis thaliana (Mouse-ear cress), this protein is ATP-citrate synthase beta chain protein 1 (ACLB-1).